A 378-amino-acid polypeptide reads, in one-letter code: N-acetyldiaminopimelate deacetylase (378 aa).

Residue D65 is part of the active site. E124 functions as the Proton acceptor in the catalytic mechanism.

It belongs to the peptidase M20A family. N-acetyldiaminopimelate deacetylase subfamily.

The catalysed reaction is N-acetyl-(2S,6S)-2,6-diaminopimelate + H2O = (2S,6S)-2,6-diaminopimelate + acetate. It functions in the pathway amino-acid biosynthesis; L-lysine biosynthesis via DAP pathway; LL-2,6-diaminopimelate from (S)-tetrahydrodipicolinate (acetylase route): step 3/3. Functionally, catalyzes the conversion of N-acetyl-diaminopimelate to diaminopimelate and acetate. The polypeptide is N-acetyldiaminopimelate deacetylase (Anoxybacillus flavithermus (strain DSM 21510 / WK1)).